The following is a 43-amino-acid chain: uncharacterized protein (43 aa).

This is an uncharacterized protein from Schizosaccharomyces pombe (strain 972 / ATCC 24843) (Fission yeast).